A 328-amino-acid polypeptide reads, in one-letter code: Zinc chaperone YeiR (328 aa).

Glycine 9–threonine 17 lines the GTP pocket. Positions cysteine 63–cysteine 66 match the CXCC motif motif. Aspartate 155 provides a ligand contact to GTP. The CobW C-terminal domain maps to cysteine 241–lysine 321.

The protein belongs to the SIMIBI class G3E GTPase family. ZNG1 subfamily. In terms of assembly, oligomerizes in the presence of Zn(2+).

It carries out the reaction GTP + H2O = GDP + phosphate + H(+). With respect to regulation, GTPase activity is enhanced by Zn(2+) binding. In terms of biological role, zinc chaperone that directly transfers zinc cofactor to target proteins, thereby activating them. Zinc is transferred from the CXCC motif in the GTPase domain to the zinc binding site in target proteins in a process requiring GTP hydrolysis. The polypeptide is Zinc chaperone YeiR (yeiR) (Escherichia coli (strain K12)).